Reading from the N-terminus, the 1103-residue chain is PALM2-AKAP2 fusion protein (1103 aa).

Disordered stretches follow at residues 178–197 and 304–396; these read ESAS…KKPP and YNGT…SSRD. Residues 179–189 show a composition bias toward polar residues; that stretch reads SASNATETSGP. Residues S322, S352, and S383 each carry the phosphoserine modification. Positions 380 to 392 are enriched in low complexity; the sequence is VPVSPSSTTSSRC. K405 is covalently cross-linked (Glycyl lysine isopeptide (Lys-Gly) (interchain with G-Cter in SUMO1); alternate). K405 participates in a covalent cross-link: Glycyl lysine isopeptide (Lys-Gly) (interchain with G-Cter in SUMO2); alternate. The stretch at 444–521 forms a coiled coil; sequence EEMLELEKER…QKQLQQQQQQ (78 aa). Disordered stretches follow at residues 483-544 and 566-662; these read EQLD…DKAK and NSRQ…SKLW. Over residues 490–505 the composition is skewed to basic and acidic residues; sequence LESHKKYKERKERRAQ. Low complexity predominate over residues 506 to 521; it reads QEQLLLQKQLQQQQQQ. The span at 522 to 531 shows a compositional bias: polar residues; that stretch reads PPSQLCTAPA. Residues 533 to 544 are compositionally biased toward basic and acidic residues; it reads SHERASMIDKAK. Positions 566–579 are enriched in polar residues; that stretch reads NSRQAVAKGQSTPR. Phosphoserine is present on residues S567 and S624. Residues 633-643 are compositionally biased toward polar residues; that stretch reads AAGSQGNTASQ. Phosphoserine occurs at positions 692, 696, and 748. Positions 745–763 are enriched in polar residues; sequence QENSLADFSLPQTPQTDNP. The disordered stretch occupies residues 745 to 794; the sequence is QENSLADFSLPQTPQTDNPSEGRGEGVSKSFSDHGFYSPSSTLGDSPLVD. At T757 the chain carries Phosphothreonine. A PKA-RII subunit binding domain region spans residues 797–810; the sequence is LEYQAGLLVQNAIQ. Basic and acidic residues predominate over residues 817-829; sequence VDKAVSKTSRDGA. A disordered region spans residues 817 to 907; that stretch reads VDKAVSKTSR…GPINMEETRP (91 aa). The residue at position 862 (S862) is a Phosphoserine. Residues 865-886 show a composition bias toward basic and acidic residues; that stretch reads QEKRDVLPKILPAEDRALRERG. Positions 941 to 979 form a coiled coil; the sequence is KLRSRKQRTLSMIEEEIRAAQEREEELKRQRQVLQSTQS. Phosphoserine occurs at positions 951, 979, 1009, and 1016. The disordered stretch occupies residues 962-1035; it reads EREEELKRQR…AAGTQRPKNL (74 aa). The span at 976-990 shows a compositional bias: polar residues; the sequence is STQSPRTKNAPSLPS.

Expressed in infantile heart and muscle, and fibroblasts.

It localises to the apical cell membrane. In terms of biological role, binds to regulatory subunit (RII) of protein kinase A. May be involved in establishing polarity in signaling systems or in integrating PKA-RII isoforms with downstream effectors to capture, amplify and focus diffuse, trans-cellular signals carried by cAMP. Binds to and modulates the structure of the actin cytoskeleton. The polypeptide is PALM2-AKAP2 fusion protein (Homo sapiens (Human)).